Consider the following 102-residue polypeptide: Integration host factor subunit beta (102 aa).

The protein belongs to the bacterial histone-like protein family. In terms of assembly, heterodimer of an alpha and a beta chain.

In terms of biological role, this protein is one of the two subunits of integration host factor, a specific DNA-binding protein that functions in genetic recombination as well as in transcriptional and translational control. The protein is Integration host factor subunit beta of Rhizobium rhizogenes (strain K84 / ATCC BAA-868) (Agrobacterium radiobacter).